We begin with the raw amino-acid sequence, 257 residues long: Beta-fibrinogenase mucrofibrase-5 (257 aa).

Positions M1–A18 are cleaved as a signal peptide. The propeptide occupies Q19–L24. In terms of domain architecture, Peptidase S1 spans I25–A248. Intrachain disulfides connect C31/C162, C49/C65, C97/C255, C141/C209, C173/C188, and C199/C224. The Charge relay system role is filled by H64. The N-linked (GlcNAc...) asparagine glycan is linked to N102. D109 serves as the catalytic Charge relay system. Residue S203 is the Charge relay system of the active site.

The protein belongs to the peptidase S1 family. Snake venom subfamily. As to quaternary structure, monomer. Expressed by the venom gland.

Its subcellular location is the secreted. Functionally, snake venom serine protease with strong beta-fibrinogenolytic activities, angiotensin I (AGT)-degrading activities and strong kallikrein-like activities in vitro, releasing bradykinin from kininogen (KNG1). Intravenous injection mildly lowers blood pressure in experimental rats, which may be explained by the action on angiotensin I and kininogen. Exhibits amidase activity against N-benzoyl-Pro-Phe-Arg-p-nitroanilide in vitro. This is Beta-fibrinogenase mucrofibrase-5 from Protobothrops mucrosquamatus (Taiwan habu).